The sequence spans 233 residues: Chromosome partition protein MukE (233 aa).

The tract at residues 207–233 (SLSLHDESDDADVTMGNAADSVEDEQE) is disordered.

This sequence belongs to the MukE family. As to quaternary structure, interacts, and probably forms a ternary complex, with MukF and MukB. The complex formation is stimulated by calcium or magnesium.

The protein localises to the cytoplasm. Its subcellular location is the nucleoid. Its function is as follows. Involved in chromosome condensation, segregation and cell cycle progression. May participate in facilitating chromosome segregation by condensation DNA from both sides of a centrally located replisome during cell division. Probably acts via its interaction with MukB and MukF. In Yersinia pestis, this protein is Chromosome partition protein MukE.